We begin with the raw amino-acid sequence, 194 residues long: UPF0301 protein FTH_1193 (194 aa).

Belongs to the UPF0301 (AlgH) family.

This chain is UPF0301 protein FTH_1193, found in Francisella tularensis subsp. holarctica (strain OSU18).